We begin with the raw amino-acid sequence, 1171 residues long: DNA-directed RNA polymerase subunit beta (1171 aa).

The protein belongs to the RNA polymerase beta chain family. The RNAP catalytic core consists of 2 alpha, 1 beta, 1 beta' and 1 omega subunit. When a sigma factor is associated with the core the holoenzyme is formed, which can initiate transcription.

It catalyses the reaction RNA(n) + a ribonucleoside 5'-triphosphate = RNA(n+1) + diphosphate. DNA-dependent RNA polymerase catalyzes the transcription of DNA into RNA using the four ribonucleoside triphosphates as substrates. The polypeptide is DNA-directed RNA polymerase subunit beta (Arthrobacter sp. (strain FB24)).